The sequence spans 354 residues: D-alanine--D-alanine ligase (354 aa).

In terms of domain architecture, ATP-grasp spans 133 to 338; the sequence is KHLFAQAGLP…YSDLIEQLVE (206 aa). 166–221 is a binding site for ATP; it reads EKELGYPCFVKPANLGSSVGISKCRNREELEKAFELAFEYDRKIVVEEGIAGREIE. The Mg(2+) site is built by aspartate 292, glutamate 305, and asparagine 307.

Belongs to the D-alanine--D-alanine ligase family. It depends on Mg(2+) as a cofactor. Mn(2+) is required as a cofactor.

The protein resides in the cytoplasm. It carries out the reaction 2 D-alanine + ATP = D-alanyl-D-alanine + ADP + phosphate + H(+). It functions in the pathway cell wall biogenesis; peptidoglycan biosynthesis. Cell wall formation. This Bacillus velezensis (strain DSM 23117 / BGSC 10A6 / LMG 26770 / FZB42) (Bacillus amyloliquefaciens subsp. plantarum) protein is D-alanine--D-alanine ligase.